The primary structure comprises 599 residues: Protein ECM25 (599 aa).

The 179-residue stretch at 181–359 (NRLTPLAIRQ…NLLDFFPEIA (179 aa)) folds into the Rho-GAP domain. Disordered regions lie at residues 362–447 (ISSP…PLPI), 468–495 (ASSS…SSTD), and 543–563 (ELQE…KFSQ). Low complexity-rich tracts occupy residues 363–373 (SSPPSSVSSSS), 396–413 (TLPR…TSPT), and 468–483 (ASSS…KTPS). The span at 543 to 562 (ELQEKKKKNETTSKTADKFS) shows a compositional bias: basic and acidic residues.

It is found in the cytoplasm. Its function is as follows. May be involved in cell wall organization and biogenesis. The sequence is that of Protein ECM25 (ECM25) from Saccharomyces cerevisiae (strain ATCC 204508 / S288c) (Baker's yeast).